We begin with the raw amino-acid sequence, 123 residues long: Unknown 12C protein (123 aa).

Residues 1–17 (MMSALFLVLSVSLLVSG) form the signal peptide.

In terms of processing, contains 6 disulfide bonds. As to expression, expressed in acontia, a specialised envenomation structure laden with batteries of venom-containing nematocysts found only in the superfamily Metridioidea.

Its subcellular location is the secreted. The protein localises to the nematocyst. Its function is as follows. Cysteine-rich protein with probable toxin activity. The protein is Unknown 12C protein of Calliactis polypus (Hermit crab anemone).